Here is a 151-residue protein sequence, read N- to C-terminus: Phosphopantetheine adenylyltransferase (151 aa).

Residue Ser9 coordinates substrate. ATP-binding positions include 9–10 (SF) and His17. Lys41, Thr73, and Arg87 together coordinate substrate. Residues 88 to 90 (GLR), Glu98, and 122 to 128 (KAHISST) each bind ATP.

Belongs to the bacterial CoaD family. In terms of assembly, homohexamer. Requires Mg(2+) as cofactor.

It is found in the cytoplasm. The catalysed reaction is (R)-4'-phosphopantetheine + ATP + H(+) = 3'-dephospho-CoA + diphosphate. The protein operates within cofactor biosynthesis; coenzyme A biosynthesis; CoA from (R)-pantothenate: step 4/5. Functionally, reversibly transfers an adenylyl group from ATP to 4'-phosphopantetheine, yielding dephospho-CoA (dPCoA) and pyrophosphate. The polypeptide is Phosphopantetheine adenylyltransferase (Christiangramia forsetii (strain DSM 17595 / CGMCC 1.15422 / KT0803) (Gramella forsetii)).